An 856-amino-acid polypeptide reads, in one-letter code: Wall-associated receptor kinase 17 (856 aa).

The N-terminal stretch at 1–42 is a signal peptide; the sequence is MPSRSPACRPRGRNRRSAADAVARPLALALILVSTLPRAAHS. N-linked (GlcNAc...) asparagine glycosylation is found at asparagine 171 and asparagine 234. An EGF-like 1 domain is found at 297 to 334; the sequence is FEKLCKYGTCVDAPTGAGYLCKCPSGYDGNPYVSDGCQ. 5 cysteine pairs are disulfide-bonded: cysteine 301–cysteine 306, cysteine 319–cysteine 333, cysteine 339–cysteine 353, cysteine 347–cysteine 362, and cysteine 364–cysteine 379. The region spanning 335 to 380 is the EGF-like 2; calcium-binding domain; it reads DINECRNYNSNNCTYQNLCNNTLGGYTCSCPENNIGDGYRTGTGCN. N-linked (GlcNAc...) asparagine glycosylation is found at asparagine 346 and asparagine 354. Asparagine 380 carries N-linked (GlcNAc...) asparagine glycosylation. Residues 452–470 traverse the membrane as a helical segment; that stretch reads VLGVSLVLMVTTTTAASCY. Residues 527 to 805 form the Protein kinase domain; it reads YSESRILGRG…VLQELRRSFT (279 aa). Residues 533–541 and lysine 555 contribute to the ATP site; that span reads LGRGGQGTV. Aspartate 652 serves as the catalytic Proton acceptor. The tract at residues 816 to 844 is disordered; that stretch reads SIQENSEQEEKHLHESRSIPSLQSSEVST. Positions 823-832 are enriched in basic and acidic residues; it reads QEEKHLHESR. The span at 833 to 844 shows a compositional bias: polar residues; sequence SIPSLQSSEVST.

Belongs to the protein kinase superfamily. Ser/Thr protein kinase family. As to quaternary structure, interacts with WAK17 isoform 2; the interaction is direct. Interacts with LRR5; the interaction is direct. In terms of assembly, interacts with WAK17 isoform 1; the interaction is direct. (Microbial infection) Interacts with G.zeae CFEM1 (via CFEM domain); the interaction is direct. Interacts with G.zeae CFEMN1; the interaction is direct. Interacts with G.zeae CFEM5; the interaction is direct. It depends on Mn(2+) as a cofactor. Mg(2+) is required as a cofactor.

The protein localises to the cell membrane. The enzyme catalyses L-seryl-[protein] + ATP = O-phospho-L-seryl-[protein] + ADP + H(+). The catalysed reaction is L-threonyl-[protein] + ATP = O-phospho-L-threonyl-[protein] + ADP + H(+). Kinase that contributes to activation of the hypersensitive response, a form of programmed cell death, upon fungal infection. Its function is as follows. Secreted protein that contributes to activation of the hypersensitive response, a form of programmed cell death, upon fungal infection. May sense the presence of fungal material and relay the signal to WAK17 isoform 1. This Zea mays (Maize) protein is Wall-associated receptor kinase 17.